Reading from the N-terminus, the 199-residue chain is Glycerol-3-phosphate acyltransferase (199 aa).

The next 5 membrane-spanning stretches (helical) occupy residues 3–23 (AAVW…GVLV), 50–70 (WGPA…AVLV), 78–98 (DWML…SVFL), 113–133 (LLFL…SVIL), and 154–174 (LALG…LLIF).

The protein belongs to the PlsY family. In terms of assembly, probably interacts with PlsX.

The protein resides in the cell inner membrane. The enzyme catalyses an acyl phosphate + sn-glycerol 3-phosphate = a 1-acyl-sn-glycero-3-phosphate + phosphate. It participates in lipid metabolism; phospholipid metabolism. Functionally, catalyzes the transfer of an acyl group from acyl-phosphate (acyl-PO(4)) to glycerol-3-phosphate (G3P) to form lysophosphatidic acid (LPA). This enzyme utilizes acyl-phosphate as fatty acyl donor, but not acyl-CoA or acyl-ACP. This is Glycerol-3-phosphate acyltransferase from Thermus thermophilus (strain ATCC 27634 / DSM 579 / HB8).